The sequence spans 554 residues: Glucose-6-phosphate isomerase (554 aa).

Glutamate 359 acts as the Proton donor in catalysis. Active-site residues include histidine 390 and lysine 518.

It belongs to the GPI family.

It localises to the cytoplasm. The enzyme catalyses alpha-D-glucose 6-phosphate = beta-D-fructose 6-phosphate. It participates in carbohydrate biosynthesis; gluconeogenesis. Its pathway is carbohydrate degradation; glycolysis; D-glyceraldehyde 3-phosphate and glycerone phosphate from D-glucose: step 2/4. Its function is as follows. Catalyzes the reversible isomerization of glucose-6-phosphate to fructose-6-phosphate. The chain is Glucose-6-phosphate isomerase from Pseudomonas entomophila (strain L48).